We begin with the raw amino-acid sequence, 195 residues long: Probable GTP-binding protein EngB (195 aa).

One can recognise an EngB-type G domain in the interval 22–195 (GRPEVALAGR…WAALLPFLTE (174 aa)). GTP-binding positions include 30 to 37 (GRSNVGKS), 57 to 61 (GKTQT), 75 to 78 (DVPG), 142 to 145 (TKAD), and 174 to 176 (FSS). Mg(2+) is bound by residues Ser37 and Thr59.

This sequence belongs to the TRAFAC class TrmE-Era-EngA-EngB-Septin-like GTPase superfamily. EngB GTPase family. The cofactor is Mg(2+).

Necessary for normal cell division and for the maintenance of normal septation. In Geobacillus thermodenitrificans (strain NG80-2), this protein is Probable GTP-binding protein EngB.